The primary structure comprises 442 residues: Trigger factor (442 aa).

The region spanning 163–248 (YDRVTINYCI…IIKIEKKQEL (86 aa)) is the PPIase FKBP-type domain.

Belongs to the FKBP-type PPIase family. Tig subfamily.

It localises to the cytoplasm. It carries out the reaction [protein]-peptidylproline (omega=180) = [protein]-peptidylproline (omega=0). Functionally, involved in protein export. Acts as a chaperone by maintaining the newly synthesized protein in an open conformation. Functions as a peptidyl-prolyl cis-trans isomerase. This is Trigger factor from Buchnera aphidicola subsp. Acyrthosiphon pisum (strain Tuc7).